The sequence spans 261 residues: CD40 ligand (261 aa).

Over 1–22 the chain is Cytoplasmic; it reads MVETYHQPAPRSAATGLPVSMK. The helical; Signal-anchor for type II membrane protein transmembrane segment at 23 to 43 threads the bilayer; that stretch reads IFMYLLTVFLITQMIGSALFA. The Extracellular portion of the chain corresponds to 44-261; that stretch reads VYLHRRLDKI…GFTSFGLLKL (218 aa). Positions 122-261 constitute a THD domain; sequence IAAHVISEAS…GFTSFGLLKL (140 aa). A disulfide bridge connects residues Cys-178 and Cys-218. A glycan (N-linked (GlcNAc...) asparagine) is linked at Asn-240.

Belongs to the tumor necrosis factor family. Homotrimer. Interacts with CD28. CD40 ligand, soluble form: Exists as either a monomer or a homotrimer. Forms a ternary complex between CD40 and integrins for CD40-CD40LG signaling. The soluble form derives from the membrane form by proteolytic processing.

It localises to the cell membrane. Its subcellular location is the cell surface. The protein resides in the secreted. Cytokine that acts as a ligand to CD40/TNFRSF5. Costimulates T-cell proliferation and cytokine production. Its cross-linking on T-cells generates a costimulatory signal which enhances the production of IL4 and IL10 in conjunction with the TCR/CD3 ligation and CD28 costimulation. Induces the activation of NF-kappa-B. Induces the activation of kinases MAPK8 and PAK2 in T-cells. Mediates B-cell proliferation in the absence of co-stimulus as well as IgE production in the presence of IL4. Involved in immunoglobulin class switching. In terms of biological role, acts as a ligand for integrins, specifically ITGA5:ITGB1 and ITGAV:ITGB3; both integrins and the CD40 receptor are required for activation of CD40-CD40LG signaling, which have cell-type dependent effects, such as B-cell activation, NF-kappa-B signaling and anti-apoptotic signaling. The polypeptide is CD40 ligand (CD40LG) (Aotus trivirgatus (Three-striped night monkey)).